A 78-amino-acid chain; its full sequence is Large ribosomal subunit protein bL28 (78 aa).

Belongs to the bacterial ribosomal protein bL28 family.

The sequence is that of Large ribosomal subunit protein bL28 (rpmB) from Xylella fastidiosa (strain 9a5c).